A 495-amino-acid polypeptide reads, in one-letter code: NADH-ubiquinone oxidoreductase chain 4 (495 aa).

15 helical membrane passes run 9 to 29, 39 to 59, 89 to 109, 118 to 138, 139 to 159, 173 to 193, 214 to 234, 245 to 265, 272 to 292, 313 to 333, 335 to 355, 367 to 387, 388 to 408, 413 to 433, and 457 to 477; these read YFDLSGLILCPVLGSIILLFI, LIGLCVSLITFLYSLVLWIQF, LSLFFVILTTFLIPICILVGW, EYIIAFLICEFLMIAVFCMLD, LLLFYVFFESVLIPMFIIIGV, FFLYTLLGSVFMLLAILLILL, ILLWIAFFASFAVKVPMVPVH, PTAGSVILAGILLKLGTYGFL, FPEATLCFTPFIYTLSAIAII, VAHMNLVTIGMFSLNIQGIGG, ILLMLSHGLVSSALFLCVGVL, YGGLVSTMPNFSTIFFFFTLA, NMSLPGTSSFIGEFLILVGAF, LVATLRALGMILGAAYSLWLY, and VFIFLPFLVGVVWMGVYPKVF.

Belongs to the complex I subunit 4 family.

The protein localises to the mitochondrion membrane. The catalysed reaction is a ubiquinone + NADH + 5 H(+)(in) = a ubiquinol + NAD(+) + 4 H(+)(out). Functionally, core subunit of the mitochondrial membrane respiratory chain NADH dehydrogenase (Complex I) that is believed to belong to the minimal assembly required for catalysis. Complex I functions in the transfer of electrons from NADH to the respiratory chain. The immediate electron acceptor for the enzyme is believed to be ubiquinone. The sequence is that of NADH-ubiquinone oxidoreductase chain 4 (ND4) from Triticum aestivum (Wheat).